Reading from the N-terminus, the 724-residue chain is Phosphoribosylformylglycinamidine synthase subunit PurL (724 aa).

Residue H46 is part of the active site. ATP is bound by residues Y49 and K88. E90 serves as a coordination point for Mg(2+). Substrate contacts are provided by residues 91–94 (SHNH) and R113. H92 serves as the catalytic Proton acceptor. Position 114 (D114) interacts with Mg(2+). Q237 provides a ligand contact to substrate. D265 is a Mg(2+) binding site. Position 309–311 (309–311 (ESQ)) interacts with substrate. 2 residues coordinate ATP: D489 and G526. Residue N527 coordinates Mg(2+). Residue S529 coordinates substrate.

It belongs to the FGAMS family. As to quaternary structure, monomer. Part of the FGAM synthase complex composed of 1 PurL, 1 PurQ and 2 PurS subunits.

The protein resides in the cytoplasm. It catalyses the reaction N(2)-formyl-N(1)-(5-phospho-beta-D-ribosyl)glycinamide + L-glutamine + ATP + H2O = 2-formamido-N(1)-(5-O-phospho-beta-D-ribosyl)acetamidine + L-glutamate + ADP + phosphate + H(+). It participates in purine metabolism; IMP biosynthesis via de novo pathway; 5-amino-1-(5-phospho-D-ribosyl)imidazole from N(2)-formyl-N(1)-(5-phospho-D-ribosyl)glycinamide: step 1/2. Its function is as follows. Part of the phosphoribosylformylglycinamidine synthase complex involved in the purines biosynthetic pathway. Catalyzes the ATP-dependent conversion of formylglycinamide ribonucleotide (FGAR) and glutamine to yield formylglycinamidine ribonucleotide (FGAM) and glutamate. The FGAM synthase complex is composed of three subunits. PurQ produces an ammonia molecule by converting glutamine to glutamate. PurL transfers the ammonia molecule to FGAR to form FGAM in an ATP-dependent manner. PurS interacts with PurQ and PurL and is thought to assist in the transfer of the ammonia molecule from PurQ to PurL. The polypeptide is Phosphoribosylformylglycinamidine synthase subunit PurL (Granulibacter bethesdensis (strain ATCC BAA-1260 / CGDNIH1)).